Consider the following 937-residue polypeptide: AP-2 complex subunit beta (937 aa).

Thr-2 is modified (N-acetylthreonine). Ser-4 is modified (phosphoserine). An N6-acetyllysine modification is found at Lys-265. Phosphotyrosine is present on residues Tyr-737 and Tyr-928.

Belongs to the adaptor complexes large subunit family. Adapter protein complex 2 (AP-2) is a heterotetramer composed of two large adaptins (alpha-type subunit AP2A1 or AP2A2 and beta-type subunit AP2B1), a medium adaptin (mu-type subunit AP2M1) and a small adaptin (sigma-type subunit AP2S1). Interacts with EPN1. Interacts with EPS15; clathrin competes with EPS15. Interacts with SNAP91; clathrin competes with SNAP91. Interacts with CLTC; clathrin competes with EPS15, SNAP91 and PIP5K1C. Interacts with LDLRAP1. Interacts with AMPH and BIN1. Interacts with ARF6 (GDP-bound). Interacts (dephosphorylated at Tyr-737) with ARRB1; phosphorylation of AP2B1 at Tyr-737 disrupts the interaction. Interacts with SLC2A8. Interacts with SCYL1 and SCYL2. Interacts with TGFBR1 and TGFBR2. Interacts with PIP5K1C; clathrin competes with PIP5K1C. Interacts with DENND1B. Interacts with FCHO1. Interacts with RFTN1. Interacts with KIAA1107. Together with AP2A1 or AP2A2 and AP2M1, it interacts with ADAM10; this interaction facilitates ADAM10 endocytosis from the plasma membrane during long-term potentiation in hippocampal neurons. The N-terminus is blocked. In terms of processing, phosphorylation at Tyr-737 by SRC occurs at the plasma membrane in clathrin-coated vesicles (CCVs).

It is found in the cell membrane. The protein resides in the membrane. It localises to the coated pit. Functionally, component of the adaptor protein complex 2 (AP-2). Adaptor protein complexes function in protein transport via transport vesicles in different membrane traffic pathways. Adaptor protein complexes are vesicle coat components and appear to be involved in cargo selection and vesicle formation. AP-2 is involved in clathrin-dependent endocytosis in which cargo proteins are incorporated into vesicles surrounded by clathrin (clathrin-coated vesicles, CCVs) which are destined for fusion with the early endosome. The clathrin lattice serves as a mechanical scaffold but is itself unable to bind directly to membrane components. Clathrin-associated adaptor protein (AP) complexes which can bind directly to both the clathrin lattice and to the lipid and protein components of membranes are considered to be the major clathrin adaptors contributing the CCV formation. AP-2 also serves as a cargo receptor to selectively sort the membrane proteins involved in receptor-mediated endocytosis. AP-2 seems to play a role in the recycling of synaptic vesicle membranes from the presynaptic surface. AP-2 recognizes Y-X-X-[FILMV] (Y-X-X-Phi) and [ED]-X-X-X-L-[LI] endocytosis signal motifs within the cytosolic tails of transmembrane cargo molecules. AP-2 may also play a role in maintaining normal post-endocytic trafficking through the ARF6-regulated, non-clathrin pathway. During long-term potentiation in hippocampal neurons, AP-2 is responsible for the endocytosis of ADAM10. The AP-2 beta subunit acts via its C-terminal appendage domain as a scaffolding platform for endocytic accessory proteins; at least some clathrin-associated sorting proteins (CLASPs) are recognized by their [DE]-X(1,2)-F-X-X-[FL]-X-X-X-R motif. The AP-2 beta subunit binds to clathrin heavy chain, promoting clathrin lattice assembly; clathrin displaces at least some CLASPs from AP2B1 which probably then can be positioned for further coat assembly. The protein is AP-2 complex subunit beta (AP2B1) of Bos taurus (Bovine).